Here is a 116-residue protein sequence, read N- to C-terminus: Fluoride-specific ion channel FluC 1 (116 aa).

Helical transmembrane passes span 1 to 21 (MYAP…RYLV), 32 to 52 (FPLG…WLAG), 54 to 74 (GAAD…FTTF), and 93 to 113 (VVVY…LGYH). Na(+) is bound by residues Gly69 and Thr72.

The protein belongs to the fluoride channel Fluc/FEX (TC 1.A.43) family.

It localises to the cell membrane. It catalyses the reaction fluoride(in) = fluoride(out). With respect to regulation, na(+) is not transported, but it plays an essential structural role and its presence is essential for fluoride channel function. Functionally, fluoride-specific ion channel. Important for reducing fluoride concentration in the cell, thus reducing its toxicity. In Geobacillus kaustophilus (strain HTA426), this protein is Fluoride-specific ion channel FluC 1.